A 294-amino-acid chain; its full sequence is Phosphatidylserine decarboxylase proenzyme (294 aa).

Catalysis depends on charge relay system; for autoendoproteolytic cleavage activity residues Asp-100, His-157, and Ser-261. Catalysis depends on Ser-261, which acts as the Schiff-base intermediate with substrate; via pyruvic acid; for decarboxylase activity. Ser-261 carries the post-translational modification Pyruvic acid (Ser); by autocatalysis.

This sequence belongs to the phosphatidylserine decarboxylase family. PSD-B subfamily. Prokaryotic type I sub-subfamily. As to quaternary structure, heterodimer of a large membrane-associated beta subunit and a small pyruvoyl-containing alpha subunit. It depends on pyruvate as a cofactor. In terms of processing, is synthesized initially as an inactive proenzyme. Formation of the active enzyme involves a self-maturation process in which the active site pyruvoyl group is generated from an internal serine residue via an autocatalytic post-translational modification. Two non-identical subunits are generated from the proenzyme in this reaction, and the pyruvate is formed at the N-terminus of the alpha chain, which is derived from the carboxyl end of the proenzyme. The autoendoproteolytic cleavage occurs by a canonical serine protease mechanism, in which the side chain hydroxyl group of the serine supplies its oxygen atom to form the C-terminus of the beta chain, while the remainder of the serine residue undergoes an oxidative deamination to produce ammonia and the pyruvoyl prosthetic group on the alpha chain. During this reaction, the Ser that is part of the protease active site of the proenzyme becomes the pyruvoyl prosthetic group, which constitutes an essential element of the active site of the mature decarboxylase.

It localises to the cell membrane. The enzyme catalyses a 1,2-diacyl-sn-glycero-3-phospho-L-serine + H(+) = a 1,2-diacyl-sn-glycero-3-phosphoethanolamine + CO2. It functions in the pathway phospholipid metabolism; phosphatidylethanolamine biosynthesis; phosphatidylethanolamine from CDP-diacylglycerol: step 2/2. Its function is as follows. Catalyzes the formation of phosphatidylethanolamine (PtdEtn) from phosphatidylserine (PtdSer). This is Phosphatidylserine decarboxylase proenzyme from Histophilus somni (strain 2336) (Haemophilus somnus).